Consider the following 439-residue polypeptide: Acyl-coenzyme A thioesterase 9, mitochondrial (439 aa).

The transit peptide at M1–G21 directs the protein to the mitochondrion. 2 HotDog ACOT-type domains span residues K84 to E209 and E289 to V401. K103 carries the post-translational modification N6-acetyllysine.

This sequence belongs to the acyl coenzyme A hydrolase family. In terms of assembly, interacts with NYAP1, NYAP2 and MYO16.

The protein resides in the mitochondrion. Its subcellular location is the mitochondrion matrix. It localises to the mitochondrion inner membrane. It carries out the reaction butanoyl-CoA + H2O = butanoate + CoA + H(+). It catalyses the reaction propanoyl-CoA + H2O = propanoate + CoA + H(+). The enzyme catalyses hexadecanoyl-CoA + H2O = hexadecanoate + CoA + H(+). The catalysed reaction is octanoyl-CoA + H2O = octanoate + CoA + H(+). It carries out the reaction decanoyl-CoA + H2O = decanoate + CoA + H(+). It catalyses the reaction tetradecanoyl-CoA + H2O = tetradecanoate + CoA + H(+). The enzyme catalyses 4,8-dimethylnonanoyl-CoA + H2O = 4,8-dimethylnonanoate + CoA + H(+). The catalysed reaction is 3-methylbutanoyl-CoA + H2O = 3-methylbutanoate + CoA + H(+). It carries out the reaction 2-methylpropanoyl-CoA + H2O = 2-methylpropanoate + CoA + H(+). The protein operates within lipid metabolism; fatty acid metabolism. Its activity is regulated as follows. Strongly inhibited by NADH and CoA. Mitochondrial acyl-CoA thioesterase. Catalyzes the hydrolysis of acyl-CoAs into free fatty acids and coenzyme A (CoA), regulating their respective intracellular levels. Regulates both mitochondrial lipid and amino acid metabolism. This chain is Acyl-coenzyme A thioesterase 9, mitochondrial, found in Homo sapiens (Human).